The primary structure comprises 842 residues: Protein translocase subunit SecA (842 aa).

Residues Gln91, 109–113 (GEGKT), and Asp498 contribute to the ATP site. A compositionally biased stretch (basic and acidic residues) spans 798–824 (QGQHVSAEDGKEKVKPQPVVKDNHIGR). Residues 798–827 (QGQHVSAEDGKEKVKPQPVVKDNHIGRNDP) form a disordered region. Zn(2+) contacts are provided by Cys828, Cys830, Cys839, and Cys840.

The protein belongs to the SecA family. Monomer and homodimer. Part of the essential Sec protein translocation apparatus which comprises SecA, SecYEG and auxiliary proteins SecDF. Other proteins may also be involved. It depends on Zn(2+) as a cofactor.

It localises to the cell membrane. The protein localises to the cytoplasm. The enzyme catalyses ATP + H2O + cellular proteinSide 1 = ADP + phosphate + cellular proteinSide 2.. Part of the Sec protein translocase complex. Interacts with the SecYEG preprotein conducting channel. Has a central role in coupling the hydrolysis of ATP to the transfer of proteins into and across the cell membrane, serving as an ATP-driven molecular motor driving the stepwise translocation of polypeptide chains across the membrane. This Staphylococcus carnosus (strain TM300) protein is Protein translocase subunit SecA.